We begin with the raw amino-acid sequence, 354 residues long: Trans-enoyl reductase pydC (354 aa).

Residues A16 to V342 form the Enoyl reductase (ER) domain. NADP(+)-binding positions include C51–K54, S180–N183, Y198, F245–E246, and V336–S337.

This sequence belongs to the zinc-containing alcohol dehydrogenase family. As to quaternary structure, monomer.

It functions in the pathway mycotoxin biosynthesis. Its function is as follows. Trans-enoyl reductase; part of the gene cluster that mediates the biosynthesis of pyrrocidines, fungal natural products containing a macrocyclic para-cyclophane connected to a decahydrofluorene ring system that show potent antibiotic activities toward Gram-negative bacteria. Within the pathway, the PKS-NRPS pydA, with the help of the trans-enoyl reductase pydC, synthesize the polyketide-tyrosyl acyl thioester product which can be reductively off-loaded by the terminal reductase (R) domain in pydA. The PKS module of pydA acts in combination with the trans-acting enoyl reductase pydC to produce a methylated polyketide attached to the ACP domain. In parallel, the adenylation (A) domain of the NRPS module activated L-tyrosine, which is then transferred to the ACP domain. The condensation (C) domain subsequently link this group to the polyketide chain, forming an enzyme-bound amide. The alpha/beta hydrolase pydG is then required to catalyze the subsequent Knoevenagel condensation that affords the 3-pyrrolin-2-one ring, whereas the four proteins pydB, pydE, pydX and pydZ then function synergistically to form the cyclophane. PydB and the membrane-bound pydX and pydZ are lipid-binding proteins that can sequester and mold the pdyG product into the inverse S-shape. Binding of the medium chain reductase pydE to the complex would trigger the cascade oxidative cyclization. PydY is involved in the Diels-Alder cycloaddition that forms the decahydrofluorene core. Additional non-enzymatic hydroxylation yields pyrrocidine A2 which can be further reduced into pyrrocidine B by an endogenous reductase. The chain is Trans-enoyl reductase pydC from Acremonium sp.